A 95-amino-acid polypeptide reads, in one-letter code: Citrate lyase acyl carrier protein (95 aa).

An O-(phosphoribosyl dephospho-coenzyme A)serine modification is found at S14.

This sequence belongs to the CitD family. Oligomer with a subunit composition of (alpha,beta,gamma)6.

The protein localises to the cytoplasm. In terms of biological role, covalent carrier of the coenzyme of citrate lyase. The protein is Citrate lyase acyl carrier protein of Haemophilus influenzae (strain PittGG).